A 716-amino-acid polypeptide reads, in one-letter code: Segment polarity protein dishevelled homolog DVL-3 (716 aa).

The DIX domain maps to 1–82; it reads MGETKIIYHL…RVVSWLVSAE (82 aa). Residue Arg-27 is modified to Omega-N-methylarginine. Ser-48 and Ser-125 each carry phosphoserine. The disordered stretch occupies residues 85–235; that stretch reads HPEPAPFCAD…VSRIERSSSF (151 aa). Residues 142-156 show a composition bias toward basic and acidic residues; that stretch reads QRERPRRRDGPEHAA. Positions 175 to 190 are enriched in low complexity; sequence SSSTLMSSELETTSFF. Residue Ser-192 is modified to Phosphoserine. Residues 199–212 are compositionally biased toward low complexity; it reads SRFSSSTEQSSASR. Residue Arg-212 is modified to Omega-N-methylarginine. Over residues 213–226 the composition is skewed to basic residues; it reads LMRRHKRRRRKQKV. In terms of domain architecture, PDZ spans 249-321; that stretch reads TVTLNMEKYN…NDDAVRVLRE (73 aa). At Arg-271 the chain carries Asymmetric dimethylarginine; by PRMT1; alternate. A symmetric dimethylarginine; by PRMT7; alternate mark is found at Arg-271 and Arg-342. Arg-342 bears the Omega-N-methylarginine; alternate mark. A Phosphothreonine modification is found at Thr-346. The DEP domain maps to 422 to 496; that stretch reads PESGLEVRDR…SEQCYYIFGD (75 aa). The tract at residues 546–691 is disordered; that stretch reads PYNPHPGFPE…PPGRDLASVP (146 aa). Residues 565-581 show a composition bias toward low complexity; sequence ASSQHSEGSRSSGSNRS. Basic and acidic residues-rich tracts occupy residues 582 to 595 and 604 to 622; these read GSDRRKEKDPKAGD and ESDHTTRSSLRGPRERAPS. Arg-614 carries the symmetric dimethylarginine; by PRMT7 modification. 2 stretches are compositionally biased toward pro residues: residues 653–663 and 670–682; these read YGPPGVPPLYG and TPPPAAMGPPGAP. Ser-697 bears the Phosphoserine mark. Arg-698 carries the omega-N-methylarginine; alternate modification. Arg-698 is modified (dimethylated arginine; alternate). Residue Ser-700 is modified to Phosphoserine.

This sequence belongs to the DSH family. As to quaternary structure, interacts (via the PDZ domain) with the C-terminal regions of VANGL1 and VANGL2. Interacts (via the region containing both the PDZ and DEP domains) with LRRFIP2; the DIX domain may inhibit this interaction. Interacts with CYLD. Interacts with CEP164 and DAB2. Interacts with DCDC2. Interacts with FOXK1 and FOXK2. Interacts with DAAM2. Ubiquitinated. Deubiquitinated by CYLD, which acts on 'Lys-63'-linked ubiquitin chains. In terms of processing, phosphorylated by CSNK1D. Post-translationally, arginine methylation may function as a switch in regulation of function in Wnt signaling. As to expression, ubiquitous.

It is found in the cytoplasm. Its function is as follows. Involved in the signal transduction pathway mediated by multiple Wnt genes. The sequence is that of Segment polarity protein dishevelled homolog DVL-3 (Dvl3) from Mus musculus (Mouse).